The sequence spans 574 residues: Optineurin (574 aa).

The interval 1–33 (MSHQPLSCLTEKGDSPTETTGNGPPTLAHPNLD) is disordered. The stretch at 38-170 (HELLQQMREL…VSELQLKLNS (133 aa)) forms a coiled coil. The interaction with Rab8 stretch occupies residues 58-209 (MKLNNQAMKG…GPIRTDSIDT (152 aa)). The short motif at 176-181 (DSFVEI) is the LIR element. Ser-177 carries the post-translational modification Phosphoserine; by TBK1. A Phosphoserine modification is found at Ser-198. A coiled-coil region spans residues 233–496 (CLREGNQKVE…ALQLAVLLKD (264 aa)). Residues 262 to 286 (AKDRSETETQTEEHKEQEKEEEKSP) are compositionally biased toward basic and acidic residues. Residues 262-292 (AKDRSETETQTEEHKEQEKEEEKSPETVGSE) are disordered. Position 336 is a phosphoserine (Ser-336). The interval 405–574 (KRRESEKVDK…LLIHVTDCII (170 aa)) is interaction with HD. Positions 406 to 515 (RRESEKVDKV…RQSLMEMQSR (110 aa)) are interaction with MYO6. The UBAN motif lies at 468 to 473 (DFHAER). Ser-521 is modified (phosphoserine). The segment at 544–574 (QQNIPIHSCPKCGEVLPDIDTLLIHVTDCII) adopts a CCHC NOA-type zinc-finger fold. 4 residues coordinate Zn(2+): Cys-552, Cys-555, His-568, and Cys-572.

As to quaternary structure, self-associates. Interacts with HD. Interacts with GTF3A. Interacts with MYO6. Interacts (via UBAN) with ubiquitinated TFRC. Interacts with GTP-bound Rab8 (RAB8A and/or RAB8B). Interacts with TBC1D17. Interacts with TBK1. Interacts with TRAF3. Binds to linear ubiquitin chains. Interacts with LC3 family members MAP1LC3A, MAP1LC3B, GABARAP, GABARAPL1 and GABARAPL2; OPTN phosphorylation increases the association (at least with MAP1LC3B). Interacts with RAB12; the interaction may be indirect. Interacts with TBK1; this interaction leads to the Golgi localization of TBK1 and its subsequent activation. Interacts with palmitoyltransferase ZDHHC17/HIP14; the interaction does not lead to palmitoylation of OPTN. Interacts with CYLD. Interacts with TOM1; the interaction is indirect and is mediated by MYO6, which acts as a bridge between TOM1 and OPTN. Interacts with USP12; the interaction is independent of USP12 deubiquitinase activity and may be involved in regulation of autophagic flux. Post-translationally, phosphorylated by TBK1, leading to restrict bacterial proliferation in case of infection. Present in aqueous humor of the eye (at protein level). Expressed in trabecular meshwork and astrocytes.

The protein resides in the cytoplasm. The protein localises to the perinuclear region. It localises to the golgi apparatus. It is found in the trans-Golgi network. Its subcellular location is the cytoplasmic vesicle. The protein resides in the autophagosome. The protein localises to the recycling endosome. Plays an important role in the maintenance of the Golgi complex, in membrane trafficking, in exocytosis, through its interaction with myosin VI and Rab8. Links myosin VI to the Golgi complex and plays an important role in Golgi ribbon formation. Negatively regulates the induction of IFNB in response to RNA virus infection. Plays a neuroprotective role in the eye and optic nerve. Probably part of the TNF-alpha signaling pathway that can shift the equilibrium toward induction of cell death. May act by regulating membrane trafficking and cellular morphogenesis via a complex that contains Rab8 and huntingtin (HD). Mediates the interaction of Rab8 with the probable GTPase-activating protein TBC1D17 during Rab8-mediated endocytic trafficking, such as that of transferrin receptor (TFRC/TfR); regulates Rab8 recruitment to tubules emanating from the endocytic recycling compartment. Autophagy receptor that interacts directly with both the cargo to become degraded and an autophagy modifier of the MAP1 LC3 family; targets ubiquitin-coated bacteria (xenophagy) and appears to function in the same pathway as SQSTM1 and CALCOCO2/NDP52. The polypeptide is Optineurin (OPTN) (Sus scrofa (Pig)).